A 411-amino-acid chain; its full sequence is [Pyruvate dehydrogenase (acetyl-transferring)] kinase isozyme 4, mitochondrial (411 aa).

Positions Ile138 to Ser368 constitute a Histidine kinase domain. Residues Glu254–Arg261, Asp293, Ser312–Thr313, and Gly329–Leu334 contribute to the ATP site.

It belongs to the PDK/BCKDK protein kinase family. As to quaternary structure, homodimer. Interacts with the pyruvate dehydrogenase complex subunit DLAT, and is part of the multimeric pyruvate dehydrogenase complex that contains multiple copies of pyruvate dehydrogenase (E1), dihydrolipoamide acetyltransferase (DLAT, E2) and lipoamide dehydrogenase (DLD, E3). As to expression, ubiquitous; highest levels of expression in heart and skeletal muscle.

The protein localises to the mitochondrion matrix. It carries out the reaction L-seryl-[pyruvate dehydrogenase E1 alpha subunit] + ATP = O-phospho-L-seryl-[pyruvate dehydrogenase E1 alpha subunit] + ADP + H(+). Kinase that plays a key role in regulation of glucose and fatty acid metabolism and homeostasis via phosphorylation of the pyruvate dehydrogenase subunits PDHA1 and PDHA2. This inhibits pyruvate dehydrogenase activity, and thereby regulates metabolite flux through the tricarboxylic acid cycle, down-regulates aerobic respiration and inhibits the formation of acetyl-coenzyme A from pyruvate. Inhibition of pyruvate dehydrogenase decreases glucose utilization and increases fat metabolism in response to prolonged fasting and starvation. Plays an important role in maintaining normal blood glucose levels under starvation, and is involved in the insulin signaling cascade. Via its regulation of pyruvate dehydrogenase activity, plays an important role in maintaining normal blood pH and in preventing the accumulation of ketone bodies under starvation. In the fed state, mediates cellular responses to glucose levels and to a high-fat diet. Regulates both fatty acid oxidation and de novo fatty acid biosynthesis. Plays a role in the generation of reactive oxygen species. Protects detached epithelial cells against anoikis. Plays a role in cell proliferation via its role in regulating carbohydrate and fatty acid metabolism. In Homo sapiens (Human), this protein is [Pyruvate dehydrogenase (acetyl-transferring)] kinase isozyme 4, mitochondrial (PDK4).